A 59-amino-acid chain; its full sequence is Putative potassium channel toxin Ts22 (59 aa).

The signal sequence occupies residues 1 to 22 (MKAFYGILIIFILISMIDLSQQ). 3 disulfides stabilise this stretch: Cys-29–Cys-50, Cys-35–Cys-55, and Cys-39–Cys-57.

It belongs to the short scorpion toxin superfamily. Potassium channel inhibitor family. Alpha-KTx 04 subfamily. As to expression, expressed by the venom gland.

The protein localises to the secreted. Potently blocks voltage-gated potassium channels (Kv). The sequence is that of Putative potassium channel toxin Ts22 from Tityus serrulatus (Brazilian scorpion).